The primary structure comprises 56 residues: Ovomucoid (56 aa).

The Kazal-like domain maps to 6–56 (VDCSEYPKPACMSEYRPLCGSDNKTYVNKCNFCNAVVESNGTLTLSHFGKC). Disulfide bonds link Cys-8–Cys-38, Cys-16–Cys-35, and Cys-24–Cys-56. N-linked (GlcNAc...) asparagine glycosylation occurs at Asn-45.

The protein resides in the secreted. The protein is Ovomucoid of Colinus virginianus (Northern bobwhite).